A 379-amino-acid polypeptide reads, in one-letter code: UDP-N-acetylglucosamine--N-acetylmuramyl-(pentapeptide) pyrophosphoryl-undecaprenol N-acetylglucosamine transferase (379 aa).

UDP-N-acetyl-alpha-D-glucosamine contacts are provided by residues 13-15 (TGG), Asn-123, Arg-166, Ser-194, and Gln-295.

Belongs to the glycosyltransferase 28 family. MurG subfamily.

It is found in the cell inner membrane. It carries out the reaction di-trans,octa-cis-undecaprenyl diphospho-N-acetyl-alpha-D-muramoyl-L-alanyl-D-glutamyl-meso-2,6-diaminopimeloyl-D-alanyl-D-alanine + UDP-N-acetyl-alpha-D-glucosamine = di-trans,octa-cis-undecaprenyl diphospho-[N-acetyl-alpha-D-glucosaminyl-(1-&gt;4)]-N-acetyl-alpha-D-muramoyl-L-alanyl-D-glutamyl-meso-2,6-diaminopimeloyl-D-alanyl-D-alanine + UDP + H(+). The protein operates within cell wall biogenesis; peptidoglycan biosynthesis. In terms of biological role, cell wall formation. Catalyzes the transfer of a GlcNAc subunit on undecaprenyl-pyrophosphoryl-MurNAc-pentapeptide (lipid intermediate I) to form undecaprenyl-pyrophosphoryl-MurNAc-(pentapeptide)GlcNAc (lipid intermediate II). This chain is UDP-N-acetylglucosamine--N-acetylmuramyl-(pentapeptide) pyrophosphoryl-undecaprenol N-acetylglucosamine transferase, found in Rhodospirillum centenum (strain ATCC 51521 / SW).